The chain runs to 770 residues: Probable zinc transporter protein DDB_G0291141 (770 aa).

Over 1–36 (MAGSLDDSIYNNGRSGGGGGGFKFSKGFNKDSISKR) the chain is Cytoplasmic. The chain crosses the membrane as a helical span at residues 37–57 (IIMMLFFSKGIRAWSCIILLY). The Extracellular segment spans residues 58–62 (FLQSS). A helical membrane pass occupies residues 63–83 (ISIISASFYMCLFSAIFSVVV). Residues 84–100 (EKPWNLLSSLRPSQIKK) lie on the Cytoplasmic side of the membrane. Residues 101 to 117 (IIYHSIFNLLIIITWNS) traverse the membrane as a helical segment. Residues 118–123 (SIKFIG) are Extracellular-facing. Residues 124–146 (PIGSILASDYTFSTYPLIFNSLL) traverse the membrane as a helical segment. Residues 147 to 154 (QGNFLATD) are Cytoplasmic-facing. Residues 155-175 (MSRGSIMLMIGYFLIPLFGIS) traverse the membrane as a helical segment. The Extracellular segment spans residues 176-184 (NRLDILGYT). A helical membrane pass occupies residues 185-205 (SSQVFMIGLFSLIVHNVLVLW). Topologically, residues 206-224 (KKTIVRSWNSGSSGGKNKL) are cytoplasmic. A helical membrane pass occupies residues 225–245 (SSLGSCVSTIILFVFKLFEGF). Over 246-262 (SSGSSGSDSINQVSYSQ) the chain is Extracellular. Residues 263–283 (LFVIAIITFILYSLNQFIDDV) traverse the membrane as a helical segment. Residues 284-291 (SEKELTFN) are Cytoplasmic-facing. Residues 292–312 (VLSKVSLTSSVIFGLLAALFI) traverse the membrane as a helical segment. Over 313–316 (GFKD) the chain is Extracellular. A helical transmembrane segment spans residues 317–337 (FFHPILILSFIFIINAIHILY). Residues 338–404 (SKSNDIQPMT…QIVDKPTSRR (67 aa)) are Cytoplasmic-facing. A helical transmembrane segment spans residues 405–425 (IFTFLVINLMFMFVEMAYGIW). Topologically, residues 426-434 (TNSLGLITD) are extracellular. A helical transmembrane segment spans residues 435 to 455 (ACHMFFDATALFIALVAEVIS). Residues 456–469 (QWKQNDKYSYGYGR) are Cytoplasmic-facing. The helical transmembrane segment at 470–490 (FQVLSGFVNGIFLIFIAVTIL) threads the bilayer. Residues 491–507 (MESVERLLEPPEINTDK) lie on the Extracellular side of the membrane. The helical transmembrane segment at 508–528 (LLLVSVLGFIINLIGIFSFHG) threads the bilayer. At 529–592 (DHGHSHGGGG…GVFLHLLADT (64 aa)) the chain is on the cytoplasmic side. Residues 532–566 (HSHGGGGGHSHGGGEKKEKHHGHSHGGHGDHQQVT) are disordered. The helical transmembrane segment at 593–613 (LGSVGVIVSSLIIQIWGYTLA) threads the bilayer. A topological domain (extracellular) is located at residue Asp-614. Residues 615–635 (PICSLLISILIFLSVLPLIAN) form a helical membrane-spanning segment. The Cytoplasmic portion of the chain corresponds to 636–770 (TAKTLLQCTP…SSSSHHHRHN (135 aa)). The segment at 751–770 (DIHHNHSSSSSSSSHHHRHN) is disordered.

Belongs to the cation diffusion facilitator (CDF) transporter (TC 2.A.4) family. SLC30A subfamily.

The protein resides in the membrane. Its function is as follows. May be involved in zinc transport from the cytoplasm to either intracellular organelles or extracellular spaces. The chain is Probable zinc transporter protein DDB_G0291141 from Dictyostelium discoideum (Social amoeba).